Here is a 466-residue protein sequence, read N- to C-terminus: Coagulation factor VII (466 aa).

The first 20 residues, 1–20 (MVSQALRLLCLLLGLQGCLA), serve as a signal peptide directing secretion. Positions 21–60 (AGGVAEASGGETRDXXWKPGPHRVFITQEEAHGVLHRRRR) are excised as a propeptide. Residues 61–105 (ANAFLEELRPGSLERECKEEQCSFEEAREIFKDLERTKLFWISYS) enclose the Gla domain. Residues glutamate 66, glutamate 67, glutamate 74, glutamate 76, glutamate 79, glutamate 80, glutamate 85, glutamate 86, glutamate 89, and glutamate 95 each carry the 4-carboxyglutamate modification. The cysteines at positions 77 and 82 are disulfide-linked. The 37-residue stretch at 106–142 (DGDQCASSPCQNGGSCKDQLQSYICFCLPAFEGRNCE) folds into the EGF-like 1; calcium-binding domain. Cystine bridges form between cysteine 110–cysteine 121, cysteine 115–cysteine 130, cysteine 132–cysteine 141, cysteine 151–cysteine 162, cysteine 158–cysteine 172, cysteine 174–cysteine 187, cysteine 195–cysteine 322, cysteine 219–cysteine 224, cysteine 238–cysteine 254, and cysteine 370–cysteine 389. Serine 112 is a glycosylation site (O-linked (Glc...) serine; alternate). Residue serine 112 is glycosylated (O-linked (Xyl...) serine; alternate). The O-linked (Fuc) serine glycan is linked to serine 120. Aspartate 123 carries the post-translational modification (3R)-3-hydroxyaspartate. The region spanning 147 to 188 (DQLICVNENGGCEQYCSDHTGTKRSCRCHEGYSLLADGVSCT) is the EGF-like 2 domain. N-linked (GlcNAc...) asparagine glycosylation occurs at asparagine 205. The Peptidase S1 domain maps to 213-452 (IVGGKVCPKG…YIEWLQKLMR (240 aa)). Residues histidine 253 and aspartate 302 each act as charge relay system in the active site. Asparagine 382 carries N-linked (GlcNAc...) asparagine glycosylation. Aspartate 398 lines the substrate pocket. An intrachain disulfide couples cysteine 400 to cysteine 428. Serine 404 serves as the catalytic Charge relay system.

The protein belongs to the peptidase S1 family. Heterodimer of a light chain and a heavy chain linked by a disulfide bond. Post-translationally, the vitamin K-dependent, enzymatic carboxylation of some glutamate residues allows the modified protein to bind calcium. In terms of processing, the iron and 2-oxoglutarate dependent 3-hydroxylation of aspartate and asparagine is (R) stereospecific within EGF domains. O-glycosylated. O-fucosylated by POFUT1 on a conserved serine or threonine residue found in the consensus sequence C2-X(4,5)-[S/T]-C3 of EGF domains, where C2 and C3 are the second and third conserved cysteines. Post-translationally, can be either O-glucosylated or O-xylosylated at Ser-112 by POGLUT1.

It localises to the secreted. It catalyses the reaction Selective cleavage of Arg-|-Ile bond in factor X to form factor Xa.. In terms of biological role, initiates the extrinsic pathway of blood coagulation. Serine protease that circulates in the blood in a zymogen form. Factor VII is converted to factor VIIa by factor Xa, factor XIIa, factor IXa, or thrombin by minor proteolysis. In the presence of tissue factor and calcium ions, factor VIIa then converts factor X to factor Xa by limited proteolysis. Factor VIIa also converts factor IX to factor IXa in the presence of tissue factor and calcium. The polypeptide is Coagulation factor VII (F7) (Pan troglodytes (Chimpanzee)).